Consider the following 455-residue polypeptide: UDP-glycosyltransferase 79B2 (455 aa).

Residues S266, V325–Q327, H342–E350, and L364–Q367 each bind UDP-alpha-D-glucose.

This sequence belongs to the UDP-glycosyltransferase family.

In Arabidopsis thaliana (Mouse-ear cress), this protein is UDP-glycosyltransferase 79B2 (UGT79B2).